A 114-amino-acid polypeptide reads, in one-letter code: Hydrogenase maturation factor HypA (114 aa).

Position 2 (histidine 2) interacts with Ni(2+). Zn(2+) contacts are provided by cysteine 73, cysteine 76, cysteine 90, and cysteine 93.

It belongs to the HypA/HybF family.

Its function is as follows. Involved in the maturation of [NiFe] hydrogenases. Required for nickel insertion into the metal center of the hydrogenase. The polypeptide is Hydrogenase maturation factor HypA (Klebsiella pneumoniae subsp. pneumoniae (strain ATCC 700721 / MGH 78578)).